The following is a 292-amino-acid chain: Tissue factor (292 aa).

The first 35 residues, 1-35 (MATPNGPRVPCPQAAVARALLFGLVLIQGAGVAGT), serve as a signal peptide directing secretion. The Extracellular portion of the chain corresponds to 36-248 (TDVVVAYNIT…TSHEKVLSTE (213 aa)). Asparagine 43 is a glycosylation site (N-linked (GlcNAc...) asparagine). The short motif at 46 to 48 (WKS) is the WKS motif element. Residues cysteine 81 and cysteine 89 are joined by a disulfide bond. N-linked (GlcNAc...) asparagine glycans are attached at residues asparagine 153 and asparagine 181. Cysteine 215 and cysteine 238 are joined by a disulfide. The chain crosses the membrane as a helical span at residues 249 to 271 (LFFIIGTVMLVIIIFIVVLSVSL). At 272-292 (HKCRKVRAERSGKENTPLNAA) the chain is on the cytoplasmic side. Cysteine 274 is lipidated: S-palmitoyl cysteine.

The protein belongs to the tissue factor family. As to quaternary structure, interacts with HSPE; the interaction, inhibited by heparin, promotes the generation of activated factor X and activates coagulation in the presence of activated factor VII.

It localises to the membrane. In terms of biological role, initiates blood coagulation by forming a complex with circulating factor VII or VIIa. The [TF:VIIa] complex activates factors IX or X by specific limited proteolysis. TF plays a role in normal hemostasis by initiating the cell-surface assembly and propagation of the coagulation protease cascade. The polypeptide is Tissue factor (F3) (Bos taurus (Bovine)).